We begin with the raw amino-acid sequence, 304 residues long: Acetyl-coenzyme A carboxylase carboxyl transferase subunit beta (304 aa).

A CoA carboxyltransferase N-terminal domain is found at 25-294 (LWIKCPETGE…EAARRESGSQ (270 aa)).

Belongs to the AccD/PCCB family. Acetyl-CoA carboxylase is a heterohexamer composed of biotin carboxyl carrier protein (AccB), biotin carboxylase (AccC) and two subunits each of ACCase subunit alpha (AccA) and ACCase subunit beta (AccD).

Its subcellular location is the cytoplasm. It carries out the reaction N(6)-carboxybiotinyl-L-lysyl-[protein] + acetyl-CoA = N(6)-biotinyl-L-lysyl-[protein] + malonyl-CoA. Its pathway is lipid metabolism; malonyl-CoA biosynthesis; malonyl-CoA from acetyl-CoA: step 1/1. Functionally, component of the acetyl coenzyme A carboxylase (ACC) complex. Biotin carboxylase (BC) catalyzes the carboxylation of biotin on its carrier protein (BCCP) and then the CO(2) group is transferred by the transcarboxylase to acetyl-CoA to form malonyl-CoA. The protein is Acetyl-coenzyme A carboxylase carboxyl transferase subunit beta of Sinorhizobium fredii (strain NBRC 101917 / NGR234).